Consider the following 92-residue polypeptide: Major allergen I polypeptide chain 1 (92 aa).

Residues 1-22 form the signal peptide; sequence MKGACVLVLLWAALLLISGGNC.

It belongs to the secretoglobin family. Heterotetramer composed of two non-covalently linked disulfide-linked heterodimer of chains 1 and 2. In terms of tissue distribution, saliva and sebaceous glands.

It localises to the secreted. The protein is Major allergen I polypeptide chain 1 (CH1) of Felis catus (Cat).